The chain runs to 312 residues: Copper chaperone for superoxide dismutase, chloroplastic (312 aa).

The transit peptide at 1-78 (MVGFLRALTA…AAAAATADLS (78 aa)) directs the protein to the chloroplast. The region spanning 89-152 (ELMTEFMVDM…TLHQTGRDAR (64 aa)) is the HMA domain. Cu cation contacts are provided by C100, C103, C301, and C303.

In the C-terminal section; belongs to the Cu-Zn superoxide dismutase family. Requires Cu(2+) as cofactor.

The protein resides in the plastid. The protein localises to the chloroplast. Copper chaperone for superoxide dismutases (SODs). Binds copper ions and delivers them specifically to SODs. Is required for assistance in SODs disulfide bond formation and thereby activation of SODs. The sequence is that of Copper chaperone for superoxide dismutase, chloroplastic (CCS) from Oryza sativa subsp. japonica (Rice).